A 274-amino-acid polypeptide reads, in one-letter code: MDLPLFVIALILGIVEGLTEFLPISSTGHLIIIGDLLGYNDATSKVFKIVIQFAAILAVCWDYRERLARVAAGVGSEPAAQRFVGLLFIGFLPAAVLGLMFHSTIKSLLFNPLTVATALVVGGVLILWLERRAYHPRINAVDEMRWADALKVGFAQAAAMIPGTSRSGATILGGLVFGLSRKAAAEFSFFLSIPTMFAATVYDLYKNRDLLHMGDLPVFAIGFVASFFAAMFAVKAFIRFISNHTFIAFAWYRIVFGLVVLATWQLELVEWSEP.

7 consecutive transmembrane segments (helical) span residues 4–24, 41–61, 83–103, 108–128, 184–204, 218–238, and 246–266; these read PLFV…FLPI, DATS…AVCW, FVGL…MFHS, LLFN…LILW, AAEF…VYDL, VFAI…KAFI, and FIAF…TWQL.

It belongs to the UppP family.

The protein localises to the cell inner membrane. The catalysed reaction is di-trans,octa-cis-undecaprenyl diphosphate + H2O = di-trans,octa-cis-undecaprenyl phosphate + phosphate + H(+). In terms of biological role, catalyzes the dephosphorylation of undecaprenyl diphosphate (UPP). Confers resistance to bacitracin. The protein is Undecaprenyl-diphosphatase of Aromatoleum aromaticum (strain DSM 19018 / LMG 30748 / EbN1) (Azoarcus sp. (strain EbN1)).